The chain runs to 369 residues: Cyclin-dependent kinase 5 activator 2 (369 aa).

Positions 1–11 (MGTVLSLSPAS) are enriched in polar residues. Disordered stretches follow at residues 1–55 (MGTV…SRLK), 72–176 (ASAK…SPRR), and 330–369 (EAAA…NLDR). Gly2 carries N-myristoyl glycine lipidation. Basic residues predominate over residues 74–84 (AKKKKGSKKVT). Phosphothreonine is present on Thr84. Basic and acidic residues predominate over residues 99-112 (RNRENLLRKGRDGP). Residues 122–144 (AVPVPTVPTTAATCEPPSGGSAA) show a composition bias toward low complexity. Over residues 145–171 (APPPGSGGGKPPPPPPPAPQAAPPAPG) the composition is skewed to pro residues. A compositionally biased stretch (low complexity) spans 331 to 352 (AAASTGGPPSGSSASTTSSSSA).

It belongs to the cyclin-dependent kinase 5 activator family. As to quaternary structure, heterodimer of a catalytic subunit and a regulatory subunit. Post-translationally, myristoylated. The Gly-2-Ala mutant is absent of the cell periphery, suggesting that a proper myristoylation signal is essential for the proper distribution of CDK5R2 (p39).

The protein localises to the cell membrane. Activator of CDK5/TPKII. In Mus musculus (Mouse), this protein is Cyclin-dependent kinase 5 activator 2 (Cdk5r2).